A 138-amino-acid chain; its full sequence is Small ribosomal subunit protein uS11c (138 aa).

It belongs to the universal ribosomal protein uS11 family. As to quaternary structure, part of the 30S ribosomal subunit.

The protein localises to the plastid. The protein resides in the chloroplast. The sequence is that of Small ribosomal subunit protein uS11c from Acorus calamus (Sweet flag).